Reading from the N-terminus, the 450-residue chain is Caspase Dronc (450 aa).

Positions Met1–Val134 are excised as a propeptide. The 46-residue stretch at Glu64–Val109 folds into the CARD domain. A required for binding Diap1 region spans residues Ser114–Arg125. Active-site residues include His271 and Cys318. Positions Asp321–Asp324 are excised as a propeptide.

It belongs to the peptidase C14A family. Interacts (via residues 114-125) with Diap1 (via BIR 2 domain); binding blocks Dronc-mediated cell death. Can form a stable complex with Drice. Rpr, hid and grim can out-compete Dronc for binding Diap1, therefore removing Diap1-mediated ubiquitination. Interacts (via CARD domain) with Dark (via Dark CARD and WD domains); the interaction stimulates Dark oligomerization to form the apoptosome and brings pairs of Dronc molecules together on the apoptosome to facilitate their dimerization and activation by autocatalytic cleavage. Binding to Dark stimulates apoptosome assembly. After autocatalytic cleavage the Dronc caspase domain dissociates from the apoptosome but the CARD domain remains associated. Post-translationally, ubiquitinated by Diap1, leading to its subsequent degradation. Ubiquitously expressed in embryos during early stages of development. In late third instar larvae, dramatic up-regulation in salivary glands and midgut before histolysis of these tissues.

It localises to the cytoplasm. The enzyme catalyses Strict requirement for an Asp residue at position P1 and with a marked preference for His at position P2. It has a preferred cleavage sequence of Leu-Gly-His-Asp-|-Xaa.. With respect to regulation, zymogen activated by autocatalytic cleavage; association with the Dark apoptosome brings multiple molecules together to facilitate their dimerization and activation by autocatalytic cleavage. Functionally, involved in the activation cascade of caspases responsible for apoptosis execution. Effector of steroid-mediated apoptosis during insect metamorphosis. Overexpression promotes programmed cell death. Interaction with Diap1 is required to suppress Dronc-mediated cell death; via Diap1-mediated ubiquitination of Dronc. Rate-limiting caspase in rpr, grim and hid death pathway. Recruited to the Dark apoptosome, an adapter protein complex that mediates activation of the caspase cascade in programmed cell death initiated by the intrinsic apoptosis pathway. Association with the Dark apoptosome stimulates autocatalytic cleavage and activation of Dronc, promoting Dronc-mediated cleavage of downstream effector caspases such as Drice. In Drosophila melanogaster (Fruit fly), this protein is Caspase Dronc.